A 566-amino-acid chain; its full sequence is Protein downstream neighbor of Son (566 aa).

The interval M1–D110 is disordered. Phosphoserine occurs at positions 28 and 34. A compositionally biased stretch (gly residues) spans G62 to P72. Low complexity predominate over residues A73–R82.

The protein belongs to the DONSON family. Component of the replisome complex composed of at least DONSON, MCM2, MCM7, PCNA and TICRR; interaction at least with PCNA occurs during DNA replication. As to expression, expressed in the brain, with higher levels in prenatal compared to adult brain.

The protein resides in the nucleus. Replisome component that maintains genome stability by protecting stalled or damaged replication forks. After the induction of replication stress, required for the stabilization of stalled replication forks, the efficient activation of the intra-S-phase and G/2M cell-cycle checkpoints and the maintenance of genome stability. The polypeptide is Protein downstream neighbor of Son (DONSON) (Homo sapiens (Human)).